Reading from the N-terminus, the 280-residue chain is Succinate dehydrogenase [ubiquinone] iron-sulfur subunit 2, mitochondrial (280 aa).

Residues 1–28 constitute a mitochondrion transit peptide; the sequence is MAFGLIGRVVGTKSSRLSTAARLIPARW. A 2Fe-2S ferredoxin-type domain is found at 51 to 140; that stretch reads FQIYRWNPDN…ETTITPLPHM (90 aa). [2Fe-2S] cluster is bound by residues Cys-101, Cys-106, and Cys-121. One can recognise a 4Fe-4S ferredoxin-type domain in the interval 183–213; it reads DRAKLDGMYECILCACCSTSCPSYWWNPESY. [4Fe-4S] cluster is bound by residues Cys-193, Cys-196, and Cys-199. Cys-203 contributes to the [3Fe-4S] cluster binding site. Residue Trp-208 participates in a ubiquinone binding. Residues Cys-250 and Cys-256 each contribute to the [3Fe-4S] cluster site. A [4Fe-4S] cluster-binding site is contributed by Cys-260.

Belongs to the succinate dehydrogenase/fumarate reductase iron-sulfur protein family. Component of complex II composed of eight subunits in plants: four classical SDH subunits SDH1, SDH2, SDH3 and SDH4 (a flavoprotein (FP), an iron-sulfur protein (IP), and a cytochrome b composed of a large and a small subunit.), as well as four subunits unknown in mitochondria from bacteria and heterotrophic eukaryotes. It depends on [2Fe-2S] cluster as a cofactor. Requires [3Fe-4S] cluster as cofactor. The cofactor is [4Fe-4S] cluster. As to expression, ubiquitous. Preferentially expressed in flowers, inflorescences and root tips.

It is found in the mitochondrion inner membrane. The enzyme catalyses a quinone + succinate = fumarate + a quinol. The protein operates within carbohydrate metabolism; tricarboxylic acid cycle; fumarate from succinate (eukaryal route): step 1/1. Functionally, iron-sulfur protein (IP) subunit of succinate dehydrogenase (SDH) that is involved in complex II of the mitochondrial electron transport chain and is responsible for transferring electrons from succinate to ubiquinone (coenzyme Q). The protein is Succinate dehydrogenase [ubiquinone] iron-sulfur subunit 2, mitochondrial (SDH2-2) of Arabidopsis thaliana (Mouse-ear cress).